Consider the following 375-residue polypeptide: Decapping and exoribonuclease protein Rai1 (375 aa).

Substrate contacts are provided by residues R43 and 120-122; that span reads LRG. Residues E180, E222, D224, E247, and L248 each contribute to the Mg(2+) site. E222 lines the substrate pocket. The substrate site is built by K249 and Q274.

The protein belongs to the DXO/Dom3Z family. As to quaternary structure, interacts with Rat1. It depends on Mg(2+) as a cofactor.

The enzyme catalyses a 5'-end triphospho-ribonucleoside in mRNA + H2O = a 5'-end phospho-ribonucleoside in mRNA + diphosphate + H(+). It carries out the reaction a 5'-end NAD(+)-phospho-ribonucleoside in mRNA + H2O = a 5'-end phospho-ribonucleoside in mRNA + NAD(+) + H(+). The catalysed reaction is a 5'-end (N(7)-methyl 5'-triphosphoguanosine)-ribonucleoside-ribonucleotide in mRNA + H2O = a (N(7)-methyl 5'-triphosphoguanosine)-nucleoside + a 5'-end phospho-ribonucleoside in mRNA + H(+). Functionally, decapping enzyme for NAD-capped RNAs: specifically hydrolyzes the nicotinamide adenine dinucleotide (NAD) cap from a subset of RNAs by removing the entire NAD moiety from the 5'-end of an NAD-capped RNA. The NAD-cap is present at the 5'-end of some RNAs and snoRNAs. In contrast to the canonical 5'-end N7 methylguanosine (m7G) cap, the NAD cap promotes mRNA decay. Also acts as a non-canonical decapping enzyme that removes the entire cap structure of m7G capped or incompletely capped RNAs and mediates their subsequent degradation. Specifically degrades pre-mRNAs with a defective 5'-end m7G cap and is part of a pre-mRNA capping quality control. Possesses 5'-pyrophosphohydrolase activity, hydrolyzing the 5'-end triphosphate to release pyrophosphates, and 5'-3' exonuclease activity. May be involved in RNA degradation in the nucleus. The chain is Decapping and exoribonuclease protein Rai1 from Drosophila melanogaster (Fruit fly).